The primary structure comprises 377 residues: Molybdenum import ATP-binding protein ModC (377 aa).

Residues 4–240 form the ABC transporter domain; it reads IAPRSIRGEF…PALPLATARD (237 aa). 38 to 45 provides a ligand contact to ATP; the sequence is GPSGCGKS. The 71-residue stretch at 299 to 369 folds into the Mop domain; the sequence is RTSILNILPA…IKGVALAPER (71 aa).

The protein belongs to the ABC transporter superfamily. Molybdate importer (TC 3.A.1.8) family. As to quaternary structure, the complex is composed of two ATP-binding proteins (ModC), two transmembrane proteins (ModB) and a solute-binding protein (ModA).

It localises to the cell inner membrane. The catalysed reaction is molybdate(out) + ATP + H2O = molybdate(in) + ADP + phosphate + H(+). In terms of biological role, part of the ABC transporter complex ModABC involved in molybdenum import. Responsible for energy coupling to the transport system. The polypeptide is Molybdenum import ATP-binding protein ModC (Rhodopseudomonas palustris (strain HaA2)).